Here is a 1637-residue protein sequence, read N- to C-terminus: MNKNSKKKLDFLPNKLNKYSIRRFTVGTASILVGATLIFGVANDQAEAAENNTTQKQDDSSDASKVKGNVQTIEQSSANSNESDIPEQVDVTKDTTEQASTEEKANTTEQASTEEKADTTEQATTEEAPKAEGTDKVETEEAPKAEETDKATTEEAPKAEETDKATEEAPKTEETDKATTEEAPAAEETSKAATEEAPKAEETSKAATEEAPKAEETEKTATEEAPKTEETDKVETEEAPKAEETSKAATEKAPKAEETNKVETEEAPAAEETNKAATEETPAVEDTNAKSNSNAQPSETERTQVVDTVAKDLYKKSEVTEAEKAEIEKVLPKDISNLSNEEIKKIALSEVLKETANKENAQPRATFRSVSSNARTTNVNYSATALRAAAQDTVTKKGTGNFTAHGDIIHKTYKEEFPNEGTLTAFNTNFNPNTGTKGALEYNDKIDFNKDFTITVPVANNNQGNTTGADGWGFMFTQGNGQDFLNQGGILRDKGMANASGFKIDTAYNNVNGKVDKLDADKTNNLSQIGAAKVGYGTFVKNGADGVTNQVGQNALNTKDKPVNKIIYADNTTNHLDGQFHGQRLNDVVLNYDAATSTITATYAGKTWKATTDDLGIDKSQKYNFLITSSHMQNRYSNGIMRTNLEGVTITTPQADLIDDVEVTKQPIPHKTIREFDPTLEPGSPDVIVQKGEDGEKTTTTPTKVDPDTGDVVERGEPTTEVTKNPVDEIVHFTPEEVPQGHKDEFDPNLPIDGTEEVPGKPGIKNPETGEVVTPPVDDVTKHGPKAGEPEVTKEEIPFEKKREFNPDLKPGEEKVTQEGQTGEKTTTTPTTINPLTGEKVGEGEPTTEVTKEPVDEITQFGGEEVPQGHKDEFDPNLPIDGTEEVPGKPGIKNPETGEVVTPPVDDVTKHGPKAGEPEVTKEEIPFEKKREFNPDLKPGEEKVTQEGQTGEKTTTTPTTINPLTGEKVGEGEPTTEVTKEPVDEITQFGGEEVPQGHKDEFDPNLPIDGTEEVPGKPGIKNPETGEVVTPPVDDVTKHGPKAGEPEVTKEEIPFEKKREFNPDLKPGEEKVTQEGQTGEKTTTTPTTINPLTGEKVGEGEPTTEVTKEPVDEITQFGGEEVPQGHKDEFDPNLPIDGTEEVPGKPGIKNPETGEVVTPPVDDVTKHGPKAGEPEVTKEEIPYETKRVLDPTMEPGSPDKVAQKGENGEKTTTTPTTINPLTGEKVGEGEPTTEVTKEPIDEIVNYAPEIIPHGTREEIDPNLPEGETKVIPGKDGLKDPETGEIIEEPQDEVIIHGAKDDSDADSDSDADSDSDADSDSDADSDSDADSDSDSDSDSDSDSDSDADSDSDSDSDSDADSDSDADSDSDADSDSDSDADSDSDSDADSDSDSDSDSDADSDSDSDSDSDADSDSDADSDSDSDSDSDADSDSDSDSDSDADSDSDADSDSDADSDSDADSDSDSDSDSDADSDSDADSDSDADSDSDADSDSDSDSDSDADSDSDSDSDSDSDADSDSDADSDSDSDADSDSDADSDSDADGDSDADSDSDADSDSDSDSDSDSDSDSDADSDSDSDSDSDADRDHNDKTDKPNNKELPDTGNDAQNNGTLFGSLFAALGGLFLVGRRRKNKNNEEK.

Positions 1 to 48 (MNKNSKKKLDFLPNKLNKYSIRRFTVGTASILVGATLIFGVANDQAEA) are cleaved as a signal peptide. Disordered regions lie at residues 49-305 (AENN…RTQV), 689-719 (VQKG…GEPT), and 739-1611 (PQGH…NGTL). Positions 56–65 (KQDDSSDASK) are enriched in basic and acidic residues. Polar residues predominate over residues 69 to 83 (NVQTIEQSSANSNES). 3 stretches are compositionally biased toward basic and acidic residues: residues 90-106 (DVTK…EKAN), 127-180 (EAPK…KATT), and 188-264 (ETSK…KVET). Residues 289 to 298 (AKSNSNAQPS) show a composition bias toward polar residues. 5 G5 domains span residues 654–737 (QADL…TPEE), 783–865 (HGPK…GGEE), 911–993 (HGPK…GGEE), 1039–1121 (HGPK…GGEE), and 1167–1250 (HGPK…APEI). The span at 779 to 817 (DVTKHGPKAGEPEVTKEEIPFEKKREFNPDLKPGEEKVT) shows a compositional bias: basic and acidic residues. Positions 818 to 832 (QEGQTGEKTTTTPTT) are enriched in low complexity. Over residues 907 to 945 (DVTKHGPKAGEPEVTKEEIPFEKKREFNPDLKPGEEKVT) the composition is skewed to basic and acidic residues. Over residues 946–960 (QEGQTGEKTTTTPTT) the composition is skewed to low complexity. The segment covering 1035–1073 (DVTKHGPKAGEPEVTKEEIPFEKKREFNPDLKPGEEKVT) has biased composition (basic and acidic residues). Positions 1074–1088 (QEGQTGEKTTTTPTT) are enriched in low complexity. The span at 1163–1189 (DVTKHGPKAGEPEVTKEEIPYETKRVL) shows a compositional bias: basic and acidic residues. Acidic residues-rich tracts occupy residues 1282 to 1291 (TGEIIEEPQD) and 1302 to 1580 (SDAD…DSDS). 141 consecutive repeat copies span residues 1301–1302 (DS), 1303–1304 (DA), 1305–1306 (DS), 1307–1308 (DS), 1309–1310 (DA), 1311–1312 (DS), 1313–1314 (DS), 1315–1316 (DA), 1317–1318 (DS), 1319–1320 (DS), 1321–1322 (DA), 1323–1324 (DS), 1325–1326 (DS), 1327–1328 (DA), 1329–1330 (DS), 1331–1332 (DS), 1333–1334 (DS), 1335–1336 (DS), 1337–1338 (DS), 1339–1340 (DS), 1341–1342 (DS), 1343–1344 (DS), 1345–1346 (DA), 1347–1348 (DS), 1349–1350 (DS), 1351–1352 (DS), 1353–1354 (DS), 1355–1356 (DS), 1357–1358 (DA), 1359–1360 (DS), 1361–1362 (DS), 1363–1364 (DA), 1365–1366 (DS), 1367–1368 (DS), 1369–1370 (DA), 1371–1372 (DS), 1373–1374 (DS), 1375–1376 (DS), 1377–1378 (DA), 1379–1380 (DS), 1381–1382 (DS), 1383–1384 (DS), 1385–1386 (DA), 1387–1388 (DS), 1389–1390 (DS), 1391–1392 (DS), 1393–1394 (DS), 1395–1396 (DS), 1397–1398 (DA), 1399–1400 (DS), 1401–1402 (DS), 1403–1404 (DS), 1405–1406 (DS), 1407–1408 (DS), 1409–1410 (DA), 1411–1412 (DS), 1413–1414 (DS), 1415–1416 (DA), 1417–1418 (DS), 1419–1420 (DS), 1421–1422 (DS), 1423–1424 (DS), 1425–1426 (DS), 1427–1428 (DA), 1429–1430 (DS), 1431–1432 (DS), 1433–1434 (DS), 1435–1436 (DS), 1437–1438 (DS), 1439–1440 (DA), 1441–1442 (DS), 1443–1444 (DS), 1445–1446 (DA), 1447–1448 (DS), 1449–1450 (DS), 1451–1452 (DA), 1453–1454 (DS), 1455–1456 (DS), 1457–1458 (DA), 1459–1460 (DS), 1461–1462 (DS), 1463–1464 (DS), 1465–1466 (DS), 1467–1468 (DS), 1469–1470 (DA), 1471–1472 (DS), 1473–1474 (DS), 1475–1476 (DA), 1477–1478 (DS), 1479–1480 (DS), 1481–1482 (DA), 1483–1484 (DS), 1485–1486 (DS), 1487–1488 (DA), 1489–1490 (DS), 1491–1492 (DS), 1493–1494 (DS), 1495–1496 (DS), 1497–1498 (DS), 1499–1500 (DA), 1501–1502 (DS), 1503–1504 (DS), 1505–1506 (DS), 1507–1508 (DS), 1509–1510 (DS), 1511–1512 (DS), 1513–1514 (DA), 1515–1516 (DS), 1517–1518 (DS), 1519–1520 (DA), 1521–1522 (DS), 1523–1524 (DS), 1525–1526 (DS), 1527–1528 (DA), 1529–1530 (DS), 1531–1532 (DS), 1533–1534 (DA), 1535–1536 (DS), 1537–1538 (DS), 1539–1540 (DA), 1541–1542 (DG), 1543–1544 (DS), 1545–1546 (DA), 1547–1548 (DS), 1549–1550 (DS), 1551–1552 (DA), 1553–1554 (DS), 1555–1556 (DS), 1557–1558 (DS), 1559–1560 (DS), 1561–1562 (DS), 1563–1564 (DS), 1565–1566 (DS), 1567–1568 (DS), 1569–1570 (DA), 1571–1572 (DS), 1573–1574 (DS), 1575–1576 (DS), 1577–1578 (DS), 1579–1580 (DS), and 1581–1582 (DA). Residues 1301-1582 (DSDADSDSDA…DSDSDSDSDA (282 aa)) are 141 X 2 AA tandem repeats of D-[SAG]. Residues 1581–1599 (DADRDHNDKTDKPNNKELP) show a composition bias toward basic and acidic residues. Residues 1598 to 1602 (LPDTG) carry the LPXTG sorting signal motif. Threonine 1601 carries the post-translational modification Pentaglycyl murein peptidoglycan amidated threonine. A propeptide spans 1602–1637 (GNDAQNNGTLFGSLFAALGGLFLVGRRRKNKNNEEK) (removed by sortase).

The protein resides in the secreted. The protein localises to the cell wall. In terms of biological role, could have a role in preventing adhesion at some stages during an infection. This is Surface protein (pls) from Staphylococcus aureus.